The primary structure comprises 382 residues: Lipid-A-disaccharide synthase (382 aa).

This sequence belongs to the LpxB family.

It catalyses the reaction 2-N,3-O-bis[(3R)-3-hydroxytetradecanoyl]-alpha-D-glucosaminyl 1-phosphate + UDP-2-N,3-O-bis[(3R)-3-hydroxytetradecanoyl]-alpha-D-glucosamine = lipid A disaccharide (E. coli) + UDP + H(+). It carries out the reaction a lipid X + a UDP-2-N,3-O-bis[(3R)-3-hydroxyacyl]-alpha-D-glucosamine = a lipid A disaccharide + UDP + H(+). The protein operates within glycolipid biosynthesis; lipid IV(A) biosynthesis; lipid IV(A) from (3R)-3-hydroxytetradecanoyl-[acyl-carrier-protein] and UDP-N-acetyl-alpha-D-glucosamine: step 5/6. Its function is as follows. Condensation of UDP-2,3-diacylglucosamine and 2,3-diacylglucosamine-1-phosphate to form lipid A disaccharide, a precursor of lipid A, a phosphorylated glycolipid that anchors the lipopolysaccharide to the outer membrane of the cell. In Salmonella arizonae (strain ATCC BAA-731 / CDC346-86 / RSK2980), this protein is Lipid-A-disaccharide synthase.